Reading from the N-terminus, the 504-residue chain is Anaerobic nitric oxide reductase transcription regulator NorR (504 aa).

D57 is modified (4-aspartylphosphate). The region spanning 187–416 is the Sigma-54 factor interaction domain; it reads MIGLSPGMTQ…LEHAIHRAVV (230 aa). Residues 215–222 and 278–287 each bind ATP; these read GETGTGKE and ADNGTLFLDE. A DNA-binding region (H-T-H motif) is located at residues 479-498; that stretch reads WAACARMLETDVANLHRLAK.

The protein operates within nitrogen metabolism; nitric oxide reduction. Its function is as follows. Required for the expression of anaerobic nitric oxide (NO) reductase, acts as a transcriptional activator for at least the norVW operon. Activation also requires sigma-54. This Escherichia coli O6:K15:H31 (strain 536 / UPEC) protein is Anaerobic nitric oxide reductase transcription regulator NorR.